A 1295-amino-acid chain; its full sequence is Phosphoribosylformylglycinamidine synthase (1295 aa).

Residues 305–327 are disordered; sequence WPGAATGSGGEIRDEGATGRGAK. ATP is bound by residues 307 to 318, 386 to 388, and A678; these read GAATGSGGEIRD and TGY. Mg(2+) is bound by residues D679, E718, N722, and D884. S886 is an ATP binding site. The Glutamine amidotransferase type-1 domain occupies 1042 to 1295; it reads VAVLREQGVN…IFRNARKQLG (254 aa). Catalysis depends on C1135, which acts as the Nucleophile. Active-site residues include H1260 and E1262.

It in the N-terminal section; belongs to the FGAMS family. As to quaternary structure, monomer.

It is found in the cytoplasm. The catalysed reaction is N(2)-formyl-N(1)-(5-phospho-beta-D-ribosyl)glycinamide + L-glutamine + ATP + H2O = 2-formamido-N(1)-(5-O-phospho-beta-D-ribosyl)acetamidine + L-glutamate + ADP + phosphate + H(+). It participates in purine metabolism; IMP biosynthesis via de novo pathway; 5-amino-1-(5-phospho-D-ribosyl)imidazole from N(2)-formyl-N(1)-(5-phospho-D-ribosyl)glycinamide: step 1/2. Functionally, phosphoribosylformylglycinamidine synthase involved in the purines biosynthetic pathway. Catalyzes the ATP-dependent conversion of formylglycinamide ribonucleotide (FGAR) and glutamine to yield formylglycinamidine ribonucleotide (FGAM) and glutamate. The chain is Phosphoribosylformylglycinamidine synthase from Salmonella typhimurium (strain LT2 / SGSC1412 / ATCC 700720).